A 105-amino-acid chain; its full sequence is Endogenous retrovirus group K member 16 Rec protein (105 aa).

A disordered region spans residues 1-41; it reads MNPSEMQRKAPPRRRRHRNRAPSSHKMNKMMMSEEQMKLPS. The segment covering 10-20 has biased composition (basic residues); that stretch reads APPRRRRHRNR. The short motif at 13–20 is the Nuclear localization signal element; it reads RRRRHRNR. The Nuclear export signal signature appears at 50-59; that stretch reads WAQLNKLTQL.

Forms homodimers, homotrimers, and homotetramers via a C-terminal domain. Associates with XPO1 and with ZNF145.

It localises to the cytoplasm. Its subcellular location is the nucleus. It is found in the nucleolus. Functionally, retroviral replication requires the nuclear export and translation of unspliced, singly-spliced and multiply-spliced derivatives of the initial genomic transcript. Rec interacts with a highly structured RNA element (RcRE) present in the viral 3'LTR and recruits the cellular nuclear export machinery. This permits export to the cytoplasm of unspliced genomic or incompletely spliced subgenomic viral transcripts. This is Endogenous retrovirus group K member 16 Rec protein (ERVK-16) from Homo sapiens (Human).